The chain runs to 436 residues: Lactonohydrolase oryL (436 aa).

A signal peptide spans 1-27; the sequence is MLSYTSHCLQALLGVASLPYRQYQAYS.

The protein belongs to the SMP-30/CGR1 family.

The protein operates within secondary metabolite biosynthesis. Functionally, lactonohydrolase; part of the gene cluster that mediates the biosynthesis of oryzines, natural products with an unusual maleidride backbone. The two subunits of the fungal fatty acid synthase oryfasA and oryfasB probably form octenoic acid. This fatty acid is most likely activated by the acyl-CoA ligase oryP to give octenyl-CoA before the citrate synthase-like protein oryE catalyzes condensation with oxaloacetate to form tricarboxylic acid. The next steps of the pathways are conjectural, but a favorite possible route has been proposed, beginning with decarboxylation and concomitant dehydration by the decarboxylase oryM, followed by tautomerization, which may lead to the production of a diene intermediate. Reduction of this diene intermediate could give the known metabolite piliformic acid. On the pathway to oryzine B and oryzine A, however, hydroxylation of the diene by the alpha-ketoglutarate-dependent dioxygenase oryG and lactonisation by the lactonohydrolases oryH or oryL could give oryzine B directly. Finally, enoyl reduction by the dehydrogenase oryD would then convert oryzine B into oryzine A. The sequence is that of Lactonohydrolase oryL from Aspergillus oryzae (strain ATCC 42149 / RIB 40) (Yellow koji mold).